We begin with the raw amino-acid sequence, 195 residues long: Thymidine kinase (195 aa).

ATP is bound by residues 15–22 (GSMFSGKS) and 88–91 (DEVQ). E89 serves as the catalytic Proton acceptor. F120 is a substrate binding site. C145 and C148 together coordinate Zn(2+). Residues 170–174 (IILVG) and Y179 each bind substrate. Residues C183 and C186 each contribute to the Zn(2+) site.

Belongs to the thymidine kinase family. In terms of assembly, homotetramer.

Its subcellular location is the cytoplasm. It catalyses the reaction thymidine + ATP = dTMP + ADP + H(+). This Bacillus cereus (strain ATCC 14579 / DSM 31 / CCUG 7414 / JCM 2152 / NBRC 15305 / NCIMB 9373 / NCTC 2599 / NRRL B-3711) protein is Thymidine kinase.